The primary structure comprises 1073 residues: 3-hydroxy-3-methylglutaryl-coenzyme A reductase 1 (1073 aa).

8 consecutive transmembrane segments (helical) span residues 23–43 (FMVV…DDYI), 181–201 (FDIL…IKVF), 211–231 (FWLA…ALLV), 298–318 (HLVV…LTGL), 326–346 (SLIL…ILGL), 399–419 (IAYF…FWLG), 459–479 (GTVV…MVQL), and 498–518 (IISK…VYFL). Residues 182–346 (DILLIFVAYL…YTFFSAILGL (165 aa)) enclose the SSD domain. Over residues 542 to 565 (SSVTATTTTTATGTTSSGAATSKT) the composition is skewed to low complexity. A disordered region spans residues 542–589 (SSVTATTTTTATGTTSSGAATSKTIGNNKGLKSVQEIPDNEDESSDEE). The segment covering 579–589 (PDNEDESSDEE) has biased composition (acidic residues). E714 serves as the catalytic Charge relay system. 720 to 726 (STMRGCK) is a CoA binding site. NADP(+)-binding positions include 781–783 (SRF) and 808–816 (DAMGMNMIS). The Charge relay system role is filled by K848. 877–879 (VLK) provides a ligand contact to CoA. D924 serves as the catalytic Charge relay system. A helical membrane pass occupies residues 997–1017 (IVASAVLAAELSLCSALAAGH). 1021-1022 (SH) contacts CoA. H1022 functions as the Proton donor in the catalytic mechanism. Residues 1025-1056 (HNRSKAPAAGATTTTTPAITDSKASNGSIASN) are disordered. NADP(+) is bound at residue 1026 to 1027 (NR). The span at 1030 to 1042 (APAAGATTTTTPA) shows a compositional bias: low complexity. Residues 1046–1055 (SKASNGSIAS) are compositionally biased toward polar residues.

The protein belongs to the HMG-CoA reductase family.

Its subcellular location is the endoplasmic reticulum membrane. It catalyses the reaction (R)-mevalonate + 2 NADP(+) + CoA = (3S)-3-hydroxy-3-methylglutaryl-CoA + 2 NADPH + 2 H(+). Its pathway is metabolic intermediate biosynthesis; (R)-mevalonate biosynthesis; (R)-mevalonate from acetyl-CoA: step 3/3. In terms of biological role, HMG-CoA reductase; part of the first module of ergosterol biosynthesis pathway that includes the early steps of the pathway, conserved across all eukaryotes, and which results in the formation of mevalonate from acetyl-coenzyme A (acetyl-CoA). HMG1 catalyzes the reduction of hydroxymethylglutaryl-CoA (HMG-CoA) to mevalonate. The first module starts with the action of the cytosolic acetyl-CoA acetyltransferase ERG10 that catalyzes the formation of acetoacetyl-CoA. The hydroxymethylglutaryl-CoA synthase ERG13 then condenses acetyl-CoA with acetoacetyl-CoA to form HMG-CoA. The 3-hydroxy-3-methylglutaryl-coenzyme A (HMG-CoA) reductase HMG1 finally reduces HMG-CoA to produce mevalonate. This is 3-hydroxy-3-methylglutaryl-coenzyme A reductase 1 from Candida albicans (strain SC5314 / ATCC MYA-2876) (Yeast).